Reading from the N-terminus, the 29-residue chain is Galanin (29 aa).

A29 is modified (alanine amide).

This sequence belongs to the galanin family.

Its subcellular location is the secreted. Contracts smooth muscle of the gastrointestinal and genitourinary tract, regulates growth hormone release, modulates insulin release, and may be involved in the control of adrenal secretion. This is Galanin (gal) from Amia calva (Bowfin).